Reading from the N-terminus, the 446-residue chain is tRNA modification GTPase MnmE (446 aa).

R23, E81, and K120 together coordinate (6S)-5-formyl-5,6,7,8-tetrahydrofolate. The TrmE-type G domain maps to 216-370; it reads GFKVAIIGKP…LIKELELILD (155 aa). Position 226 (N226) interacts with K(+). GTP contacts are provided by residues 226–231, 245–251, and 270–273; these read NVGKSS, SDIAGTT, and DTAG. A Mg(2+)-binding site is contributed by S230. The K(+) site is built by S245, I247, and T250. T251 provides a ligand contact to Mg(2+). (6S)-5-formyl-5,6,7,8-tetrahydrofolate is bound at residue K446.

Belongs to the TRAFAC class TrmE-Era-EngA-EngB-Septin-like GTPase superfamily. TrmE GTPase family. In terms of assembly, homodimer. Heterotetramer of two MnmE and two MnmG subunits. It depends on K(+) as a cofactor.

Its subcellular location is the cytoplasm. In terms of biological role, exhibits a very high intrinsic GTPase hydrolysis rate. Involved in the addition of a carboxymethylaminomethyl (cmnm) group at the wobble position (U34) of certain tRNAs, forming tRNA-cmnm(5)s(2)U34. The sequence is that of tRNA modification GTPase MnmE from Aliarcobacter butzleri (strain RM4018) (Arcobacter butzleri).